The sequence spans 333 residues: Ornithine carbamoyltransferase (333 aa).

Carbamoyl phosphate contacts are provided by residues 57–60 (STRT), Arg-108, and 135–138 (HPTQ). L-ornithine contacts are provided by residues Asn-168, Asp-232, and 236 to 237 (SM). Carbamoyl phosphate contacts are provided by residues 274-275 (CL) and Arg-319.

It belongs to the aspartate/ornithine carbamoyltransferase superfamily. OTCase family.

The protein localises to the cytoplasm. It catalyses the reaction carbamoyl phosphate + L-ornithine = L-citrulline + phosphate + H(+). It participates in amino-acid degradation; L-arginine degradation via ADI pathway; carbamoyl phosphate from L-arginine: step 2/2. Reversibly catalyzes the transfer of the carbamoyl group from carbamoyl phosphate (CP) to the N(epsilon) atom of ornithine (ORN) to produce L-citrulline. This Pediococcus pentosaceus (strain ATCC 25745 / CCUG 21536 / LMG 10740 / 183-1w) protein is Ornithine carbamoyltransferase.